Consider the following 153-residue polypeptide: Putative transcription factor YdeB (153 aa).

This sequence belongs to the CarD family.

The sequence is that of Putative transcription factor YdeB (ydeB) from Bacillus subtilis (strain 168).